Consider the following 131-residue polypeptide: Large-conductance mechanosensitive channel (131 aa).

3 helical membrane passes run 8-28, 30-50, and 67-87; these read FAMR…GAFG, IVSS…LGGV, and GMFI…FVFV.

It belongs to the MscL family. As to quaternary structure, homopentamer.

The protein resides in the cell membrane. Channel that opens in response to stretch forces in the membrane lipid bilayer. May participate in the regulation of osmotic pressure changes within the cell. This is Large-conductance mechanosensitive channel from Geobacillus sp. (strain WCH70).